The following is a 63-amino-acid chain: Large ribosomal subunit protein bL32 (63 aa).

Residues 1–45 form a disordered region; sequence MAVQQNKKSRSRRDMRRSHDALTKPTLSVDPTTGETHLRHHMTPD. Over residues 7–16 the composition is skewed to basic residues; it reads KKSRSRRDMR. The segment covering 25 to 35 has biased composition (polar residues); that stretch reads PTLSVDPTTGE.

This sequence belongs to the bacterial ribosomal protein bL32 family.

This chain is Large ribosomal subunit protein bL32, found in Legionella pneumophila (strain Paris).